The sequence spans 506 residues: Cobyric acid synthase (506 aa).

A GATase cobBQ-type domain is found at 251 to 448; it reads DITIAIVQLP…LHGLFDSDAF (198 aa). C332 (nucleophile) is an active-site residue. H440 is a catalytic residue.

This sequence belongs to the CobB/CobQ family. CobQ subfamily.

It participates in cofactor biosynthesis; adenosylcobalamin biosynthesis. Functionally, catalyzes amidations at positions B, D, E, and G on adenosylcobyrinic A,C-diamide. NH(2) groups are provided by glutamine, and one molecule of ATP is hydrogenolyzed for each amidation. In Salmonella agona (strain SL483), this protein is Cobyric acid synthase.